The primary structure comprises 217 residues: 3,4-dihydroxy-2-butanone 4-phosphate synthase (217 aa).

Residues 37-38, D42, 150-154, and E174 contribute to the D-ribulose 5-phosphate site; these read RE and RGGHT. E38 is a binding site for Mg(2+). H153 contributes to the Mg(2+) binding site.

Belongs to the DHBP synthase family. Homodimer. Mg(2+) is required as a cofactor. Requires Mn(2+) as cofactor.

The enzyme catalyses D-ribulose 5-phosphate = (2S)-2-hydroxy-3-oxobutyl phosphate + formate + H(+). Its pathway is cofactor biosynthesis; riboflavin biosynthesis; 2-hydroxy-3-oxobutyl phosphate from D-ribulose 5-phosphate: step 1/1. Its function is as follows. Catalyzes the conversion of D-ribulose 5-phosphate to formate and 3,4-dihydroxy-2-butanone 4-phosphate. This chain is 3,4-dihydroxy-2-butanone 4-phosphate synthase, found in Pectobacterium carotovorum subsp. carotovorum (strain PC1).